We begin with the raw amino-acid sequence, 198 residues long: N-acetyltransferase 9-like protein (198 aa).

Residues 34–178 form the N-acetyltransferase domain; sequence EEIRRLTGSE…KEITMELPGE (145 aa).

It belongs to the acetyltransferase family. GNAT subfamily.

The polypeptide is N-acetyltransferase 9-like protein (Caenorhabditis briggsae).